The sequence spans 910 residues: Leucine--tRNA ligase (910 aa).

The 'HIGH' region motif lies at 42 to 52; that stretch reads PYPSGKLHMGH. The 'KMSKS' region motif lies at 668-672; sequence KMSKS. Lysine 671 is an ATP binding site.

Belongs to the class-I aminoacyl-tRNA synthetase family.

The protein resides in the cytoplasm. It catalyses the reaction tRNA(Leu) + L-leucine + ATP = L-leucyl-tRNA(Leu) + AMP + diphosphate. The sequence is that of Leucine--tRNA ligase from Neisseria meningitidis serogroup A / serotype 4A (strain DSM 15465 / Z2491).